We begin with the raw amino-acid sequence, 165 residues long: UPF0303 protein Bphyt_1734 (165 aa).

It belongs to the UPF0303 family.

This is UPF0303 protein Bphyt_1734 from Paraburkholderia phytofirmans (strain DSM 17436 / LMG 22146 / PsJN) (Burkholderia phytofirmans).